A 90-amino-acid chain; its full sequence is UPF0329 protein ECU04_1650 (90 aa).

This sequence belongs to the UPF0329 family.

This Encephalitozoon cuniculi (strain GB-M1) (Microsporidian parasite) protein is UPF0329 protein ECU04_1650.